The sequence spans 353 residues: Variable large protein 12 (353 aa).

The first 18 residues, 1–18 (MRKRISAIIMTLFMVLAS), serve as a signal peptide directing secretion. Cys-19 is lipidated: N-palmitoyl cysteine. Residue Cys-19 is the site of S-diacylglycerol cysteine attachment.

It belongs to the variable large protein (Vlp) family. Beta subfamily.

The protein localises to the cell outer membrane. Functionally, the Vlp and Vsp proteins are antigenically distinct proteins, only one vlp or vsp gene is transcriptionally active at any one time. Switching between these genes is a mechanism of host immune response evasion. The chain is Variable large protein 12 from Borrelia hermsii.